A 2162-amino-acid chain; its full sequence is Polyketide synthase 1 (2162 aa).

The interval 19 to 264 (FVFGDQTSCN…TPLAVHAPYH (246 aa)) is N-terminal acylcarrier protein transacylase domain (SAT). The 445-residue stretch at 397–841 (DSKIAIIGMS…GGNTALLVED (445 aa)) folds into the Ketosynthase family 3 (KS3) domain. Residues C578, H713, and H757 each act as for beta-ketoacyl synthase activity in the active site. The tract at residues 941–1245 (AFVFSGQGSQ…PSLMRSHDGW (305 aa)) is malonyl-CoA:ACP transacylase (MAT) domain. The active-site For acyl/malonyl transferase activity is S1030. The tract at residues 1322-1636 (TASVHRIVRE…RRVLDAAMPA (315 aa)) is product template (PT) domain. The segment at 1326-1459 (HRIVRESVDR…SSLCFGESRA (134 aa)) is N-terminal hotdog fold. Residues 1326–1631 (HRIVRESVDR…FQGVPRRVLD (306 aa)) form the PKS/mFAS DH domain. Catalysis depends on H1358, which acts as the Proton acceptor; for dehydratase activity. A C-terminal hotdog fold region spans residues 1486 to 1631 (LNSRLSSGVI…FQGVPRRVLD (146 aa)). Catalysis depends on D1545, which acts as the Proton donor; for dehydratase activity. The tract at residues 1633–1669 (AMPAPKSPNKTRDHASPNATISRAKPPQGSSPASSAQ) is disordered. A compositionally biased stretch (low complexity) spans 1658 to 1669 (PPQGSSPASSAQ). The Carrier 1 domain maps to 1692–1766 (IDPMHAVLRI…DFAVHLGLDT (75 aa)). Residue S1726 is modified to O-(pantetheine 4'-phosphoryl)serine. The span at 1772–1783 (SSGESNVSGGVS) shows a compositional bias: low complexity. Positions 1772–1809 (SSGESNVSGGVSPRSDSVAAMSSDVTTPPAQSPLGSMS) are disordered. Residues 1794–1809 (SDVTTPPAQSPLGSMS) show a composition bias toward polar residues. A Carrier 2 domain is found at 1807 to 1884 (SMSSSPCEDL…SFKHVFEQEI (78 aa)). S1844 carries the post-translational modification O-(pantetheine 4'-phosphoryl)serine. The segment at 1896-2160 (LKKYHATSTL…ERVAAFIRSA (265 aa)) is thioesterase (TE) domain. S1987 functions as the For thioesterase activity in the catalytic mechanism.

In terms of biological role, polyketide synthase; part of the Pks1 gene cluster that mediates the biosynthesis of an anthraquinone derivative pigment that contributes to conidial pigmentation that provides protection from UV radiation, heat and cold stress. The polyketide synthase Pks1 produces 1-acetyl-2,4,6,8-tetrahydroxy-9,10-anthraquinone though condensation of acetyl-CoA with malonyl-CoA. The dehydratase EthD and the laccase Mlac1 further convert the anthraquinone derivative into the final conidial pigment. This Metarhizium album (strain ARSEF 1941) protein is Polyketide synthase 1.